Here is a 488-residue protein sequence, read N- to C-terminus: Glutamyl-tRNA(Gln) amidotransferase subunit A (488 aa).

Residues Lys-77 and Ser-152 each act as charge relay system in the active site. Ser-176 serves as the catalytic Acyl-ester intermediate.

The protein belongs to the amidase family. GatA subfamily. Heterotrimer of A, B and C subunits.

It catalyses the reaction L-glutamyl-tRNA(Gln) + L-glutamine + ATP + H2O = L-glutaminyl-tRNA(Gln) + L-glutamate + ADP + phosphate + H(+). Its function is as follows. Allows the formation of correctly charged Gln-tRNA(Gln) through the transamidation of misacylated Glu-tRNA(Gln) in organisms which lack glutaminyl-tRNA synthetase. The reaction takes place in the presence of glutamine and ATP through an activated gamma-phospho-Glu-tRNA(Gln). The chain is Glutamyl-tRNA(Gln) amidotransferase subunit A from Streptococcus pyogenes serotype M12 (strain MGAS2096).